The chain runs to 604 residues: Protein CBFA2T1 (604 aa).

The tract at residues 32–114 is disordered; sequence TEKHSTMPDS…SSSSLANQQL (83 aa). Ser-41 carries the post-translational modification Phosphoserine. Over residues 63-86 the composition is skewed to polar residues; sequence QGAPRTSSFTPTTLTNGTSHSPTA. The span at 95 to 114 shows a compositional bias: low complexity; it reads NGFSNGPSSSSSSSLANQQL. Residues 120-215 enclose the TAFH domain; sequence ARQLSKLKRF…NPAQYLAQHE (96 aa). The interval 230 to 298 is disordered; it reads SELLLDVNEN…LPHPTPPPPQ (69 aa). The span at 238 to 264 shows a compositional bias: basic and acidic residues; it reads ENGKRRTPDRTKENGFDREPLHSEHPS. A compositionally biased stretch (polar residues) spans 271–285; the sequence is SPGQRYSPNNGLSYQ. Positions 289–298 are enriched in pro residues; that stretch reads LPHPTPPPPQ. The interval 337 to 383 is important for oligomerization; it reads QEEMIDHRLTDREWAEEWKHLDHLLNCIMDMVEKTRRSLTVLRRCQE. The nervy homology region 2 (NHR2) stretch occupies residues 337-383; that stretch reads QEEMIDHRLTDREWAEEWKHLDHLLNCIMDMVEKTRRSLTVLRRCQE. Positions 401 to 423 are disordered; sequence DLKKGGGSSSSHSRQQSPVNPDP. Ser-417 is subject to Phosphoserine. Residues 443–492 are nervy homology region 3 (NHR3); that stretch reads EEIWKKAEEAVNEVKRQAMTELQKAVSEAERKAHDMITTERAKMERTVAE. Zn(2+) contacts are provided by Cys-515, Cys-518, Cys-526, Cys-529, Cys-535, Cys-539, His-547, and Cys-551. The segment at 515–551 adopts an MYND-type zinc-finger fold; sequence CWNCGRKASETCSGCNTARYCGSFCQHKDWEKHHHIC. Polar residues predominate over residues 557-576; that stretch reads AQQQGDTPAVSSSVTPNSGA. The tract at residues 557 to 604 is disordered; it reads AQQQGDTPAVSSSVTPNSGAGSPMDTPPAATPRSTTPGTPSTIETTPR. Residues 587–604 show a composition bias toward low complexity; that stretch reads TPRSTTPGTPSTIETTPR.

It belongs to the CBFA2T family. In terms of assembly, homooligomer. Homotetramerization is mediated by nervy homology region 2 (NRH2). Can interact with CBFA2T2 and CBFA2T3; heterotetramerization between members of the CBFA2T family is proposed. Interacts with TCF12, SIN3A, HDAC1, HDAC2, HDAC3, NCOR1, NCOR2. Interacts with ATN1 (via its N-terminus); the interaction enhances the transcriptional repression. Interacts (via its N-terminus) with ZBTB16; the interaction increases the transcription repression activity of ZBTB16. AML1-MTG8/ETO fusion protein interacts with CBFB. AML1-MTG8/ETO is part of a stable transcription factor complex AETFC in leukemic cells; AETFC formation seems to be involved in recruitment of EP300. AML1-MTG8/ETO nervy homology region 2-mediated oligomerization is proposed to be homotypic, required for AML1-MTG8/ETO-mediated transformation of primary hematopoietic cells and is required for AML1-MTG8/ETO interaction with TCF12. In terms of tissue distribution, most abundantly expressed in brain. Lower levels in lung, heart, testis and ovary.

The protein localises to the nucleus. Functionally, transcriptional corepressor which facilitates transcriptional repression via its association with DNA-binding transcription factors and recruitment of other corepressors and histone-modifying enzymes. Can repress the expression of MMP7 in a ZBTB33-dependent manner. Can repress transactivation mediated by TCF12. Acts as a negative regulator of adipogenesis. The AML1-MTG8/ETO fusion protein frequently found in leukemic cells is involved in leukemogenesis and contributes to hematopoietic stem/progenitor cell self-renewal. The polypeptide is Protein CBFA2T1 (RUNX1T1) (Homo sapiens (Human)).